The following is a 617-amino-acid chain: Kelch-like protein diablo (617 aa).

Residues 1–55 (MGDPLLPGSTGLGSGGTAAATGGTGTTGTGLGSGGTSGTERPPSPARLTHTSEKH) form a disordered region. Positions 10–37 (TGLGSGGTAAATGGTGTTGTGLGSGGTS) are enriched in gly residues. A BTB domain is found at 73 to 140 (CDVVLNVGGR…CYTAHIIVEE (68 aa)). The 103-residue stretch at 175 to 277 (CLGIRAFADT…SPKFLVGTVG (103 aa)) folds into the BACK domain. 6 Kelch repeats span residues 324-370 (VLFA…VLND), 372-418 (LYAV…VLDG), 419-465 (FLYA…VLSG), 467-512 (LYAI…VFNN), 514-559 (IYAV…VVNG), and 560-606 (QLYA…VMRA).

It functions in the pathway protein modification; protein ubiquitination. Its function is as follows. Probable substrate-specific adapter of an E3 ubiquitin-protein ligase complex which mediates the ubiquitination and subsequent proteasomal degradation of target proteins. May have a role in synapse differentiation and growth. The polypeptide is Kelch-like protein diablo (Drosophila mojavensis (Fruit fly)).